We begin with the raw amino-acid sequence, 200 residues long: Small ribosomal subunit protein uS4 (200 aa).

Residues 22 to 41 are disordered; that stretch reads TGKEIEKRPYAPGQHGPNQR. In terms of domain architecture, S4 RNA-binding spans 92–152; the sequence is TRLDNLVYRL…EKSQNLAVVG (61 aa).

The protein belongs to the universal ribosomal protein uS4 family. As to quaternary structure, part of the 30S ribosomal subunit. Contacts protein S5. The interaction surface between S4 and S5 is involved in control of translational fidelity.

Functionally, one of the primary rRNA binding proteins, it binds directly to 16S rRNA where it nucleates assembly of the body of the 30S subunit. With S5 and S12 plays an important role in translational accuracy. The polypeptide is Small ribosomal subunit protein uS4 (Lysinibacillus sphaericus (strain C3-41)).